We begin with the raw amino-acid sequence, 118 residues long: Small ribosomal subunit protein uS13 (118 aa).

The segment at 94-118 is disordered; the sequence is GLPVRGQRTKTNARTRKGPRKPIKK.

It belongs to the universal ribosomal protein uS13 family. In terms of assembly, part of the 30S ribosomal subunit. Forms a loose heterodimer with protein S19. Forms two bridges to the 50S subunit in the 70S ribosome.

Functionally, located at the top of the head of the 30S subunit, it contacts several helices of the 16S rRNA. In the 70S ribosome it contacts the 23S rRNA (bridge B1a) and protein L5 of the 50S subunit (bridge B1b), connecting the 2 subunits; these bridges are implicated in subunit movement. Contacts the tRNAs in the A and P-sites. The protein is Small ribosomal subunit protein uS13 of Tolumonas auensis (strain DSM 9187 / NBRC 110442 / TA 4).